A 466-amino-acid chain; its full sequence is Soluble pyridine nucleotide transhydrogenase (466 aa).

36–45 (ERYHNVGGGC) contacts FAD.

The protein belongs to the class-I pyridine nucleotide-disulfide oxidoreductase family. It depends on FAD as a cofactor.

The protein resides in the cytoplasm. The catalysed reaction is NAD(+) + NADPH = NADH + NADP(+). Its function is as follows. Conversion of NADPH, generated by peripheral catabolic pathways, to NADH, which can enter the respiratory chain for energy generation. The polypeptide is Soluble pyridine nucleotide transhydrogenase (Salmonella gallinarum (strain 287/91 / NCTC 13346)).